The sequence spans 293 residues: Large ribosomal subunit protein uL18 (293 aa).

The tract at residues 249 to 273 (DASPAAKKAAKPSKRHTAKRLTYDE) is disordered. A compositionally biased stretch (basic residues) spans 256-267 (KAAKPSKRHTAK).

This sequence belongs to the universal ribosomal protein uL18 family. In terms of assembly, component of the large ribosomal subunit (LSU).

The protein resides in the cytoplasm. The protein localises to the nucleus. Component of the ribosome, a large ribonucleoprotein complex responsible for the synthesis of proteins in the cell. The small ribosomal subunit (SSU) binds messenger RNAs (mRNAs) and translates the encoded message by selecting cognate aminoacyl-transfer RNA (tRNA) molecules. The large subunit (LSU) contains the ribosomal catalytic site termed the peptidyl transferase center (PTC), which catalyzes the formation of peptide bonds, thereby polymerizing the amino acids delivered by tRNAs into a polypeptide chain. The nascent polypeptides leave the ribosome through a tunnel in the LSU and interact with protein factors that function in enzymatic processing, targeting, and the membrane insertion of nascent chains at the exit of the ribosomal tunnel. This Caenorhabditis elegans protein is Large ribosomal subunit protein uL18 (rpl-5).